Consider the following 309-residue polypeptide: Homoserine O-succinyltransferase (309 aa).

Catalysis depends on C142, which acts as the Acyl-thioester intermediate. Positions 163 and 192 each coordinate substrate. The Proton acceptor role is filled by H235. The active site involves E237. Residue R249 participates in substrate binding.

The protein belongs to the MetA family.

The protein localises to the cytoplasm. It catalyses the reaction L-homoserine + succinyl-CoA = O-succinyl-L-homoserine + CoA. Its pathway is amino-acid biosynthesis; L-methionine biosynthesis via de novo pathway; O-succinyl-L-homoserine from L-homoserine: step 1/1. Its function is as follows. Transfers a succinyl group from succinyl-CoA to L-homoserine, forming succinyl-L-homoserine. In Cronobacter sakazakii (strain ATCC BAA-894) (Enterobacter sakazakii), this protein is Homoserine O-succinyltransferase.